We begin with the raw amino-acid sequence, 632 residues long: Biosynthetic arginine decarboxylase (632 aa).

Lys-101 is subject to N6-(pyridoxal phosphate)lysine. 281-291 (FDVGGGLGVDY) contributes to the substrate binding site.

It belongs to the Orn/Lys/Arg decarboxylase class-II family. SpeA subfamily. The cofactor is Mg(2+). It depends on pyridoxal 5'-phosphate as a cofactor.

The enzyme catalyses L-arginine + H(+) = agmatine + CO2. The protein operates within amine and polyamine biosynthesis; agmatine biosynthesis; agmatine from L-arginine: step 1/1. In terms of biological role, catalyzes the biosynthesis of agmatine from arginine. The sequence is that of Biosynthetic arginine decarboxylase from Klebsiella pneumoniae (strain 342).